Here is a 776-residue protein sequence, read N- to C-terminus: Heat shock protein 110 (776 aa).

The segment at 741 to 776 is disordered; that stretch reads ILNKKKPAAPAPPKKEEPQPAAGDQPQSQPGEMDVD.

The protein belongs to the heat shock protein 70 family.

The polypeptide is Heat shock protein 110 (Caenorhabditis elegans).